A 774-amino-acid chain; its full sequence is 1,4-alpha-glucan branching enzyme GlgB 1 (774 aa).

The disordered stretch occupies residues 1-66 (MTPRPSSSGP…AEVAVSPAPD (66 aa)). Basic residues predominate over residues 29–40 (KPAKAAKKKAPR). Over residues 41-55 (RTTASANASATTSVS) the composition is skewed to low complexity. Asp457 (nucleophile) is an active-site residue. Catalysis depends on Glu510, which acts as the Proton donor. Residues 748–774 (YGGGDVVNPDPVKPEPQGGTAARRASG) are disordered.

This sequence belongs to the glycosyl hydrolase 13 family. GlgB subfamily. Monomer.

The enzyme catalyses Transfers a segment of a (1-&gt;4)-alpha-D-glucan chain to a primary hydroxy group in a similar glucan chain.. Its pathway is glycan biosynthesis; glycogen biosynthesis. Its function is as follows. Catalyzes the formation of the alpha-1,6-glucosidic linkages in glycogen by scission of a 1,4-alpha-linked oligosaccharide from growing alpha-1,4-glucan chains and the subsequent attachment of the oligosaccharide to the alpha-1,6 position. This chain is 1,4-alpha-glucan branching enzyme GlgB 1 (glgB1), found in Streptomyces coelicolor (strain ATCC BAA-471 / A3(2) / M145).